Reading from the N-terminus, the 146-residue chain is Holo-[acyl-carrier-protein] synthase (146 aa).

The Mg(2+) site is built by aspartate 9 and glutamate 63.

This sequence belongs to the P-Pant transferase superfamily. AcpS family. Mg(2+) serves as cofactor.

It localises to the cytoplasm. It carries out the reaction apo-[ACP] + CoA = holo-[ACP] + adenosine 3',5'-bisphosphate + H(+). Its function is as follows. Transfers the 4'-phosphopantetheine moiety from coenzyme A to a Ser of acyl-carrier-protein. The protein is Holo-[acyl-carrier-protein] synthase of Burkholderia orbicola (strain MC0-3).